Consider the following 400-residue polypeptide: Methylamine dehydrogenase heavy chain (400 aa).

The first 27 residues, 1–27, serve as a signal peptide directing secretion; that stretch reads MTTFQPGRLAGQLAATALLAATCSAFA.

The protein belongs to the aromatic amine dehydrogenase heavy chain family. As to quaternary structure, tetramer of two light and two heavy chains.

It localises to the periplasm. It carries out the reaction 2 oxidized [amicyanin] + methylamine + H2O = 2 reduced [amicyanin] + formaldehyde + NH4(+) + 2 H(+). Methylamine dehydrogenase carries out the oxidation of methylamine. Electrons are passed from methylamine dehydrogenase to amicyanin. In Methylobacillus flagellatus (strain ATCC 51484 / DSM 6875 / VKM B-1610 / KT), this protein is Methylamine dehydrogenase heavy chain (mauB).